We begin with the raw amino-acid sequence, 204 residues long: Elongation factor Ts (204 aa).

Positions 87-90 (TDFV) are involved in Mg(2+) ion dislocation from EF-Tu.

It belongs to the EF-Ts family.

It is found in the cytoplasm. Associates with the EF-Tu.GDP complex and induces the exchange of GDP to GTP. It remains bound to the aminoacyl-tRNA.EF-Tu.GTP complex up to the GTP hydrolysis stage on the ribosome. The chain is Elongation factor Ts from Frankia casuarinae (strain DSM 45818 / CECT 9043 / HFP020203 / CcI3).